Consider the following 363-residue polypeptide: Aminomethyltransferase (363 aa).

The protein belongs to the GcvT family. As to quaternary structure, the glycine cleavage system is composed of four proteins: P, T, L and H.

The catalysed reaction is N(6)-[(R)-S(8)-aminomethyldihydrolipoyl]-L-lysyl-[protein] + (6S)-5,6,7,8-tetrahydrofolate = N(6)-[(R)-dihydrolipoyl]-L-lysyl-[protein] + (6R)-5,10-methylene-5,6,7,8-tetrahydrofolate + NH4(+). In terms of biological role, the glycine cleavage system catalyzes the degradation of glycine. This is Aminomethyltransferase from Thioalkalivibrio sulfidiphilus (strain HL-EbGR7).